Reading from the N-terminus, the 40-residue chain is Photosystem II reaction center protein Psb30 (40 aa).

The chain crosses the membrane as a helical span at residues 12–32 (VIFQLTSVALIIIAGPAVIFV).

It belongs to the Psb30/Ycf12 family. As to quaternary structure, PSII is composed of 1 copy each of membrane proteins PsbA, PsbB, PsbC, PsbD, PsbE, PsbF, PsbH, PsbI, PsbJ, PsbK, PsbL, PsbM, PsbT, PsbX, PsbY, PsbZ, Psb30/Ycf12, peripheral proteins PsbO, CyanoQ (PsbQ), PsbU, PsbV and a large number of cofactors. It forms dimeric complexes.

Its subcellular location is the cellular thylakoid membrane. In terms of biological role, a core subunit of photosystem II (PSII), probably helps stabilize the reaction center. The chain is Photosystem II reaction center protein Psb30 from Nostoc sp. (strain PCC 7120 / SAG 25.82 / UTEX 2576).